Here is a 536-residue protein sequence, read N- to C-terminus: Signal peptide peptidase-like 5 (536 aa).

A signal peptide spans 1–29 (MSLPPFTCRLLAAAAALYLIGLLCVGADT). Residues 30 to 186 (KDVTAPKIPG…VELLLYAPKS (157 aa)) are Lumenal-facing. The 77-residue stretch at 94 to 170 (SNLTSKLSWS…TSSGDALKKS (77 aa)) folds into the PA domain. N-linked (GlcNAc...) asparagine glycans are attached at residues Asn95 and Asn151. A helical transmembrane segment spans residues 187-207 (PIVDYAVVFLWLMSVGTVFVA). Residues 208 to 243 (SVWSHVTSPKKNDEQYDELSPKKSSNVDATKGGAEE) lie on the Cytoplasmic side of the membrane. The interval 218-238 (KNDEQYDELSPKKSSNVDATK) is disordered. The helical transmembrane segment at 244–264 (ETLDISAMGAVIFVISASTFL) threads the bilayer. Over 265 to 273 (VLLFFFMSS) the chain is Lumenal. The chain crosses the membrane as a helical span at residues 274–296 (WFILILTIFFVIGGMQGMHNINV). Over 297–318 (TLITRRCSKCGQKNLKLPLLGN) the chain is Cytoplasmic. A helical membrane pass occupies residues 319 to 339 (TSILSLVVLLFCFVVAILWFM). Topologically, residues 340 to 344 (NRKTS) are lumenal. The helical transmembrane segment at 345–365 (HAWAGQDIFGICMMINVLQVA) threads the bilayer. The Cytoplasmic segment spans residues 366–374 (RLPNIRVAT). A helical membrane pass occupies residues 375–395 (ILLCCAFFYDIFWVFISPLIF). Asp384 is an active-site residue. Residues 396 to 428 (KQSVMIAVARGSKDTGESIPMLLRIPRLSDPWG) are Lumenal-facing. The chain crosses the membrane as a helical span at residues 429-449 (GYNMIGFGDILFPGLLICFIF). Asp437 is a catalytic residue. The Cytoplasmic portion of the chain corresponds to 450 to 463 (RFDKENNKGVSNGY). A helical membrane pass occupies residues 464–484 (FPWLMFGYGLGLFLTYLGLYV). The Lumenal segment spans residues 485–489 (MNGHG). The helical transmembrane segment at 490–510 (QPALLYLVPCTLGITVILGLV) threads the bilayer. The short motif at 491–493 (PAL) is the PAL element. At 511-536 (RKELRDLWNYGTQQPSAADVNPSPEA) the chain is on the cytoplasmic side.

Belongs to the peptidase A22B family. In terms of processing, glycosylated.

Its subcellular location is the endosome membrane. Functionally, intramembrane-cleaving aspartic protease (I-CLiP) that cleaves type II membrane signal peptides in the hydrophobic plane of the membrane. The polypeptide is Signal peptide peptidase-like 5 (SPPL5) (Arabidopsis thaliana (Mouse-ear cress)).